The chain runs to 689 residues: Methionine--tRNA ligase (689 aa).

A 'HIGH' region motif is present at residues 13–23 (PYANGNFHIGH). Residues Cys144, Cys147, Cys157, and Cys160 each contribute to the Zn(2+) site. The short motif at 341–345 (KMSKS) is the 'KMSKS' region element. ATP is bound at residue Lys344. The region spanning 583–689 (DFAKVDLRIA…PGASPGLRVR (107 aa)) is the tRNA-binding domain.

Belongs to the class-I aminoacyl-tRNA synthetase family. MetG type 1 subfamily. As to quaternary structure, homodimer. It depends on Zn(2+) as a cofactor.

The protein localises to the cytoplasm. It carries out the reaction tRNA(Met) + L-methionine + ATP = L-methionyl-tRNA(Met) + AMP + diphosphate. In terms of biological role, is required not only for elongation of protein synthesis but also for the initiation of all mRNA translation through initiator tRNA(fMet) aminoacylation. This Polaromonas sp. (strain JS666 / ATCC BAA-500) protein is Methionine--tRNA ligase.